The following is a 157-amino-acid chain: Nucleoside diphosphate kinase (157 aa).

ATP contacts are provided by K12, F60, R88, T94, and R105. Catalysis depends on H121, which acts as the Pros-phosphohistidine intermediate.

The protein belongs to the NDK family. It depends on Mg(2+) as a cofactor.

It localises to the cytoplasm. It carries out the reaction a 2'-deoxyribonucleoside 5'-diphosphate + ATP = a 2'-deoxyribonucleoside 5'-triphosphate + ADP. The enzyme catalyses a ribonucleoside 5'-diphosphate + ATP = a ribonucleoside 5'-triphosphate + ADP. Its function is as follows. Major role in the synthesis of nucleoside triphosphates other than ATP. The ATP gamma phosphate is transferred to the NDP beta phosphate via a ping-pong mechanism, using a phosphorylated active-site intermediate. In Pyrococcus horikoshii (strain ATCC 700860 / DSM 12428 / JCM 9974 / NBRC 100139 / OT-3), this protein is Nucleoside diphosphate kinase.